A 225-amino-acid chain; its full sequence is Prolactin (225 aa).

An N-terminal signal peptide occupies residues 1 to 28 (MTIQGSDRKGTLLLLVMSNLLFCQNVHP). Cysteine 32 and cysteine 37 are oxidised to a cystine. Residues serine 52 and serine 116 each carry the phosphoserine modification. Disulfide bonds link cysteine 84-cysteine 200 and cysteine 217-cysteine 225.

Belongs to the somatotropin/prolactin family. Interacts with PRLR.

It is found in the secreted. Its function is as follows. Prolactin acts primarily on the mammary gland by promoting lactation. This chain is Prolactin (PRL), found in Alexandromys montebelli (Japanese grass vole).